Consider the following 460-residue polypeptide: Bifunctional protein GlmU (460 aa).

The segment at 1–228 is pyrophosphorylase; it reads MKNYALVLAA…NSLAMGVNDL (228 aa). Residues 8 to 11, K22, Q72, and 77 to 78 each bind UDP-N-acetyl-alpha-D-glucosamine; these read LAAG and GT. D102 is a Mg(2+) binding site. UDP-N-acetyl-alpha-D-glucosamine is bound by residues G139, E154, N169, and N226. N226 contacts Mg(2+). The segment at 229–249 is linker; sequence YAISKAEKYLREYINKDHMLN. Positions 250–460 are N-acetyltransferase; sequence GVSMINPETI…LISPKPKKEE (211 aa). Positions 331 and 349 each coordinate UDP-N-acetyl-alpha-D-glucosamine. The Proton acceptor role is filled by H361. The UDP-N-acetyl-alpha-D-glucosamine site is built by Y364 and N375. Acetyl-CoA-binding positions include 384-385, A421, and R438; that span reads NY.

This sequence in the N-terminal section; belongs to the N-acetylglucosamine-1-phosphate uridyltransferase family. The protein in the C-terminal section; belongs to the transferase hexapeptide repeat family. As to quaternary structure, homotrimer. The cofactor is Mg(2+).

It localises to the cytoplasm. It carries out the reaction alpha-D-glucosamine 1-phosphate + acetyl-CoA = N-acetyl-alpha-D-glucosamine 1-phosphate + CoA + H(+). The enzyme catalyses N-acetyl-alpha-D-glucosamine 1-phosphate + UTP + H(+) = UDP-N-acetyl-alpha-D-glucosamine + diphosphate. The protein operates within nucleotide-sugar biosynthesis; UDP-N-acetyl-alpha-D-glucosamine biosynthesis; N-acetyl-alpha-D-glucosamine 1-phosphate from alpha-D-glucosamine 6-phosphate (route II): step 2/2. Its pathway is nucleotide-sugar biosynthesis; UDP-N-acetyl-alpha-D-glucosamine biosynthesis; UDP-N-acetyl-alpha-D-glucosamine from N-acetyl-alpha-D-glucosamine 1-phosphate: step 1/1. It functions in the pathway bacterial outer membrane biogenesis; LPS lipid A biosynthesis. Catalyzes the last two sequential reactions in the de novo biosynthetic pathway for UDP-N-acetylglucosamine (UDP-GlcNAc). The C-terminal domain catalyzes the transfer of acetyl group from acetyl coenzyme A to glucosamine-1-phosphate (GlcN-1-P) to produce N-acetylglucosamine-1-phosphate (GlcNAc-1-P), which is converted into UDP-GlcNAc by the transfer of uridine 5-monophosphate (from uridine 5-triphosphate), a reaction catalyzed by the N-terminal domain. The polypeptide is Bifunctional protein GlmU (Acholeplasma laidlawii (strain PG-8A)).